Reading from the N-terminus, the 148-residue chain is Endoribonuclease YbeY (148 aa).

Zn(2+) contacts are provided by histidine 113, histidine 117, and histidine 123.

Belongs to the endoribonuclease YbeY family. The cofactor is Zn(2+).

The protein localises to the cytoplasm. Functionally, single strand-specific metallo-endoribonuclease involved in late-stage 70S ribosome quality control and in maturation of the 3' terminus of the 16S rRNA. The polypeptide is Endoribonuclease YbeY (Borrelia duttonii (strain Ly)).